The sequence spans 308 residues: Aspartate carbamoyltransferase catalytic subunit (308 aa).

The carbamoyl phosphate site is built by arginine 59 and threonine 60. An L-aspartate-binding site is contributed by lysine 87. Residues arginine 109, histidine 139, and glutamine 142 each contribute to the carbamoyl phosphate site. The L-aspartate site is built by arginine 172 and arginine 224. Carbamoyl phosphate contacts are provided by alanine 265 and proline 266.

The protein belongs to the aspartate/ornithine carbamoyltransferase superfamily. ATCase family. As to quaternary structure, heterododecamer (2C3:3R2) of six catalytic PyrB chains organized as two trimers (C3), and six regulatory PyrI chains organized as three dimers (R2).

The enzyme catalyses carbamoyl phosphate + L-aspartate = N-carbamoyl-L-aspartate + phosphate + H(+). Its pathway is pyrimidine metabolism; UMP biosynthesis via de novo pathway; (S)-dihydroorotate from bicarbonate: step 2/3. In terms of biological role, catalyzes the condensation of carbamoyl phosphate and aspartate to form carbamoyl aspartate and inorganic phosphate, the committed step in the de novo pyrimidine nucleotide biosynthesis pathway. The protein is Aspartate carbamoyltransferase catalytic subunit of Enterococcus faecalis (strain ATCC 700802 / V583).